The chain runs to 334 residues: Probable fructose-bisphosphate aldolase class 1 (334 aa).

Belongs to the class I fructose-bisphosphate aldolase family.

It catalyses the reaction beta-D-fructose 1,6-bisphosphate = D-glyceraldehyde 3-phosphate + dihydroxyacetone phosphate. Its pathway is carbohydrate degradation; glycolysis; D-glyceraldehyde 3-phosphate and glycerone phosphate from D-glucose: step 4/4. This Xylella fastidiosa (strain 9a5c) protein is Probable fructose-bisphosphate aldolase class 1.